A 259-amino-acid polypeptide reads, in one-letter code: Short-chain dehydrogenase chry4 (259 aa).

7 residues coordinate NADP(+): R37, D55, N81, Y154, K158, V185, and T187. Y154 functions as the Proton donor in the catalytic mechanism. K158 serves as the catalytic Lowers pKa of active site Tyr.

It belongs to the short-chain dehydrogenases/reductases (SDR) family.

The protein operates within pigment biosynthesis. Short-chain dehydrogenase; part of the gene cluster that mediates the biosynthesis of the yellow pigment chrysogine. Pyruvic acid and anthranilic acid are likely substrates for the nonribosomal peptide synthetase chry1/NRPS14, with pyruvic acid adenylated by the first A domain and anthranilic acid by the second. If pyruvic acid and anthranilic acid are merged and released from chry1/NRPS14 by hydrolysis, a subsequent amidation would lead to 2-pyruvoylaminobenzamide. This process is probably catalyzed by the amidotransferase chry2 using glutamine as amino donor. The dehydrogenase chry5 that has a terminal berberine bridge domain for C-N cyclization could catalyze the cyclization of 2-pyruvoylaminobenzamide to yield acetyl-4(3H)-quinazolidinone. A final reduction of acetyl-4(3H)-quinazolidinone catalyzed by the oxidoreductase chry4 would result in chrysogine. The chain is Short-chain dehydrogenase chry4 from Gibberella zeae (strain ATCC MYA-4620 / CBS 123657 / FGSC 9075 / NRRL 31084 / PH-1) (Wheat head blight fungus).